Here is a 156-residue protein sequence, read N- to C-terminus: Small ribosomal subunit protein uS7 (156 aa).

It belongs to the universal ribosomal protein uS7 family. In terms of assembly, part of the 30S ribosomal subunit. Contacts proteins S9 and S11.

One of the primary rRNA binding proteins, it binds directly to 16S rRNA where it nucleates assembly of the head domain of the 30S subunit. Is located at the subunit interface close to the decoding center, probably blocks exit of the E-site tRNA. The chain is Small ribosomal subunit protein uS7 from Cronobacter sakazakii (strain ATCC BAA-894) (Enterobacter sakazakii).